The following is a 321-amino-acid chain: Lipoyl synthase (321 aa).

7 residues coordinate [4Fe-4S] cluster: Cys68, Cys73, Cys79, Cys94, Cys98, Cys101, and Ser308. Positions 80 to 297 constitute a Radical SAM core domain; that stretch reads FNHGTATFMI…KVLADELGFT (218 aa).

This sequence belongs to the radical SAM superfamily. Lipoyl synthase family. Requires [4Fe-4S] cluster as cofactor.

The protein resides in the cytoplasm. The catalysed reaction is [[Fe-S] cluster scaffold protein carrying a second [4Fe-4S](2+) cluster] + N(6)-octanoyl-L-lysyl-[protein] + 2 oxidized [2Fe-2S]-[ferredoxin] + 2 S-adenosyl-L-methionine + 4 H(+) = [[Fe-S] cluster scaffold protein] + N(6)-[(R)-dihydrolipoyl]-L-lysyl-[protein] + 4 Fe(3+) + 2 hydrogen sulfide + 2 5'-deoxyadenosine + 2 L-methionine + 2 reduced [2Fe-2S]-[ferredoxin]. It participates in protein modification; protein lipoylation via endogenous pathway; protein N(6)-(lipoyl)lysine from octanoyl-[acyl-carrier-protein]: step 2/2. Its function is as follows. Catalyzes the radical-mediated insertion of two sulfur atoms into the C-6 and C-8 positions of the octanoyl moiety bound to the lipoyl domains of lipoate-dependent enzymes, thereby converting the octanoylated domains into lipoylated derivatives. This is Lipoyl synthase from Shewanella sp. (strain ANA-3).